The following is a 953-amino-acid chain: Atromentin synthetase invA5 (953 aa).

The tract at residues 37–460 is adenylation (A) domain; sequence SRAVSQYPDH…SGRIKDTVIV (424 aa). In terms of domain architecture, Carrier spans 592 to 670; it reads APSTETEKTL…SLAKYVDSLI (79 aa). The segment at 597 to 667 is thiolation and peptide carrier (T) domain; the sequence is TEKTLAGIYA…VISSLAKYVD (71 aa). Ser-629 bears the O-(pantetheine 4'-phosphoryl)serine mark. The thioesterase (TE) domain stretch occupies residues 693–795; that stretch reads PIFMVHPGVG…FTGLINIPPN (103 aa).

Belongs to the ATP-dependent AMP-binding enzyme family.

It participates in secondary metabolite biosynthesis. In terms of biological role, an L-tyrosine:2-oxoglutarate aminotransferase (probably invD) and atromentin synthetase invA5 catalyze consecutive steps to turn over L-tyrosine into atromentin, which represents the generic precursor molecule for the entire terphenylquinone and pulvinic acid family of pigments, which are widely distributed secondary metabolites in homobasidiomycetes. The first step catalyzed by the aminotransferase converts L-tyrosine in to 4-hydroxyphenylpyruvate (4-HPP). Adenylation of two 4-HPP monomers by the invA5 adenylation (A) domain, covalent tethering of the monomers as a thioester and oxoester onto the invA5 thiolation (T) and thioesterase (TE) domains, respectively, and symmetric C-C-bond formation between two monomers catalyzed by the invA5 TE domain leads to atromentin. The chain is Atromentin synthetase invA5 (invA5) from Paxillus involutus (Naked brimcap).